We begin with the raw amino-acid sequence, 210 residues long: uncharacterized protein (210 aa).

The first 21 residues, 1–21 (MLKMNVKKALVILVALALVAA), serve as a signal peptide directing secretion.

This is an uncharacterized protein from Archaeoglobus fulgidus (strain ATCC 49558 / DSM 4304 / JCM 9628 / NBRC 100126 / VC-16).